A 623-amino-acid polypeptide reads, in one-letter code: Putative pentatricopeptide repeat-containing protein At3g11460, mitochondrial (623 aa).

The transit peptide at 1–35 directs the protein to the mitochondrion; sequence MIVVTSFVRNSAVAAVASTPWNVRLRELAYQSLFS. PPR repeat units lie at residues 17–51, 52–86, 87–117, 120–154, 155–189, 190–220, 221–255, 256–290, 291–321, 322–356, 357–387, and 393–423; these read ASTP…GSSP, DAFS…GCET, EPFV…NPQS, LSVC…GVSV, DSVT…GLDS, EVAV…MPVK, GLIT…GVCP, DPFT…GFVP, NVFV…MPVK, SLVS…GIRP, DGAV…MKRE, and GPEH…MPVE. The type E motif stretch occupies residues 428 to 503; sequence VWGALLGACK…KPGYSYVEHK (76 aa). Residues 504-535 are type E(+) motif; sequence GRVHLFLAGDRSHEQTEEVHRMLDELETSVME. The segment at 536 to 623 is type DYW motif; that stretch reads LAGNMDCDRG…DGVCSCKDYW (88 aa).

This sequence belongs to the PPR family. PCMP-H subfamily. As to quaternary structure, interacts with MORF8/RIP1.

It localises to the mitochondrion. Involved in C-to-U editing of mitochondrial RNA. Required specifically for editing the mitochondrial NAD2 transcript. The sequence is that of Putative pentatricopeptide repeat-containing protein At3g11460, mitochondrial (PCMP-H52) from Arabidopsis thaliana (Mouse-ear cress).